The following is a 312-amino-acid chain: Porphobilinogen deaminase (312 aa).

Residue Cys-243 is modified to S-(dipyrrolylmethanemethyl)cysteine.

This sequence belongs to the HMBS family. As to quaternary structure, monomer. The cofactor is dipyrromethane.

It catalyses the reaction 4 porphobilinogen + H2O = hydroxymethylbilane + 4 NH4(+). Its pathway is porphyrin-containing compound metabolism; protoporphyrin-IX biosynthesis; coproporphyrinogen-III from 5-aminolevulinate: step 2/4. Functionally, tetrapolymerization of the monopyrrole PBG into the hydroxymethylbilane pre-uroporphyrinogen in several discrete steps. This Vibrio parahaemolyticus serotype O3:K6 (strain RIMD 2210633) protein is Porphobilinogen deaminase.